We begin with the raw amino-acid sequence, 283 residues long: Tumor necrosis factor receptor superfamily member 14 (283 aa).

The signal sequence occupies residues 1–38 (MEPPGDWGPPPWRSTPKTDVLRLVLYLTFLGAPCYAPA). Over 39-202 (LPSCKEDEYP…GAGTSSSHWV (164 aa)) the chain is Extracellular. Cystine bridges form between Cys42-Cys53, Cys54-Cys67, Cys57-Cys75, Cys78-Cys93, Cys96-Cys111, Cys99-Cys119, Cys121-Cys138, and Cys127-Cys135. TNFR-Cys repeat units lie at residues 42–75 (CKED…GTVC), 78–119 (CPPG…NAVC), and 121–162 (CSPG…DTLC). Asn110 carries N-linked (GlcNAc...) asparagine glycosylation. An N-linked (GlcNAc...) asparagine glycan is attached at Asn173. The helical transmembrane segment at 203 to 223 (WWFLSGSLVIVIVCSTVGLII) threads the bilayer. Residues 224–283 (CVKRRKPRGDVVKVIVSVQRKRQEAEGEATVIEALQAPPDVTTVAVEETIPSFTGRSPNH) are Cytoplasmic-facing. Phosphoserine is present on Ser240.

It belongs to the tumor necrosis factor receptor superfamily. In terms of assembly, interacts with TRAF2, TRAF3 and TRAF5. Interacts (via CRD1/TNFR-Cys 1) with CD160; this interaction is direct. Interacts with LTA and TNFSF14. Interacts (via CRD1/TNFR-Cys 1) in cis and trans with BTLA; the cis interactions inhibits the trans interactions. As to quaternary structure, (Microbial infection) Interacts with herpes simplex virus 1/HHV-1 envelope glycoprotein D. (Microbial infection) Interacts with herpes simplex virus 2/HHV-2 envelope glycoprotein D. N-glycosylated. In terms of tissue distribution, widely expressed, with the highest expression in lung, spleen and thymus. Expressed in a subpopulation of B cells and monocytes. Expressed in naive T cells.

It localises to the cell membrane. Functionally, receptor for four distinct ligands: The TNF superfamily members TNFSF14/LIGHT and homotrimeric LTA/lymphotoxin-alpha and the immunoglobulin superfamily members BTLA and CD160, altogether defining a complex stimulatory and inhibitory signaling network. Signals via the TRAF2-TRAF3 E3 ligase pathway to promote immune cell survival and differentiation. Participates in bidirectional cell-cell contact signaling between antigen presenting cells and lymphocytes. In response to ligation of TNFSF14/LIGHT, delivers costimulatory signals to T cells, promoting cell proliferation and effector functions. Interacts with CD160 on NK cells, enhancing IFNG production and anti-tumor immune response. In the context of bacterial infection, acts as a signaling receptor on epithelial cells for CD160 from intraepithelial lymphocytes, triggering the production of antimicrobial proteins and pro-inflammatory cytokines. Upon binding to CD160 on activated CD4+ T cells, down-regulates CD28 costimulatory signaling, restricting memory and alloantigen-specific immune response. May interact in cis (on the same cell) or in trans (on other cells) with BTLA. In cis interactions, appears to play an immune regulatory role inhibiting in trans interactions in naive T cells to maintain a resting state. In trans interactions, can predominate during adaptive immune response to provide survival signals to effector T cells. In terms of biological role, (Microbial infection) Acts as a receptor for Herpes simplex virus 1/HHV-1. Its function is as follows. (Microbial infection) Acts as a receptor for Herpes simplex virus 2/HHV-2. The protein is Tumor necrosis factor receptor superfamily member 14 of Homo sapiens (Human).